Reading from the N-terminus, the 426-residue chain is Trigger factor 1 (426 aa).

In terms of domain architecture, PPIase FKBP-type spans 163-248 (QDTVNIDFAG…VNKLKRKEYA (86 aa)).

This sequence belongs to the FKBP-type PPIase family. Tig subfamily.

The protein localises to the cytoplasm. It carries out the reaction [protein]-peptidylproline (omega=180) = [protein]-peptidylproline (omega=0). Involved in protein export. Acts as a chaperone by maintaining the newly synthesized protein in an open conformation. Functions as a peptidyl-prolyl cis-trans isomerase. The chain is Trigger factor 1 from Desulfitobacterium hafniense (strain Y51).